The primary structure comprises 506 residues: Histidine ammonia-lyase (506 aa).

The segment at residues 144-146 (ASG) is a cross-link (5-imidazolinone (Ala-Gly)). A 2,3-didehydroalanine (Ser) modification is found at Ser-145.

It belongs to the PAL/histidase family. In terms of processing, contains an active site 4-methylidene-imidazol-5-one (MIO), which is formed autocatalytically by cyclization and dehydration of residues Ala-Ser-Gly.

The protein localises to the cytoplasm. It catalyses the reaction L-histidine = trans-urocanate + NH4(+). It participates in amino-acid degradation; L-histidine degradation into L-glutamate; N-formimidoyl-L-glutamate from L-histidine: step 1/3. The polypeptide is Histidine ammonia-lyase (Legionella pneumophila (strain Paris)).